Reading from the N-terminus, the 184-residue chain is Large ribosomal subunit protein uL18 (184 aa).

This sequence belongs to the universal ribosomal protein uL18 family. Part of the 50S ribosomal subunit. Contacts the 5S and 23S rRNAs.

This is one of the proteins that bind and probably mediate the attachment of the 5S RNA into the large ribosomal subunit, where it forms part of the central protuberance. The polypeptide is Large ribosomal subunit protein uL18 (Haloferax mediterranei (strain ATCC 33500 / DSM 1411 / JCM 8866 / NBRC 14739 / NCIMB 2177 / R-4) (Halobacterium mediterranei)).